The following is a 733-amino-acid chain: Ribosomal protein S6 kinase alpha-2 (733 aa).

In terms of domain architecture, Protein kinase 1 spans phenylalanine 59–phenylalanine 318. ATP-binding positions include leucine 65–valine 73 and lysine 91. Aspartate 184 acts as the Proton acceptor in catalysis. Serine 218 is subject to Phosphoserine; by PDPK1. Residues valine 319–serine 388 enclose the AGC-kinase C-terminal domain. Residue serine 377 is modified to Phosphoserine. One can recognise a Protein kinase 2 domain in the interval tyrosine 415–isoleucine 672. ATP-binding positions include isoleucine 421–cysteine 429 and lysine 444. Aspartate 532 serves as the catalytic Proton acceptor.

The protein belongs to the protein kinase superfamily. AGC Ser/Thr protein kinase family. S6 kinase subfamily. Forms a complex with either MAPK1/ERK2 or MAPK3/ERK1 in quiescent cells. Transiently dissociates following mitogenic stimulation. Interacts with FBXO5; cooperate to induce the metaphase arrest of early blastomeres; increases and stabilizes interaction of FBXO5 with CDC20. Requires Mg(2+) as cofactor. Activated by phosphorylation at Ser-218 by PDPK1. Autophosphorylated on Ser-377, as part of the activation process. May be phosphorylated at Thr-356 and Ser-360 by MAPK1/ERK2 and MAPK3/ERK1. Post-translationally, N-terminal myristoylation results in an activated kinase in the absence of added growth factors.

The protein localises to the nucleus. Its subcellular location is the cytoplasm. It catalyses the reaction L-seryl-[protein] + ATP = O-phospho-L-seryl-[protein] + ADP + H(+). The catalysed reaction is L-threonyl-[protein] + ATP = O-phospho-L-threonyl-[protein] + ADP + H(+). With respect to regulation, upon extracellular signal or mitogen stimulation, phosphorylated at Thr-570 in the C-terminal kinase domain (CTKD) by MAPK1/ERK2 and MAPK3/ERK1. The activated CTKD then autophosphorylates Ser-377, allowing binding of PDPK1, which in turn phosphorylates Ser-218 in the N-terminal kinase domain (NTDK) leading to the full activation of the protein and subsequent phosphorylation of the substrates by the NTKD. Functionally, serine/threonine-protein kinase that acts downstream of ERK (MAPK1/ERK2 and MAPK3/ERK1) signaling and mediates mitogenic and stress-induced activation of transcription factors, regulates translation, and mediates cellular proliferation, survival, and differentiation. May function as tumor suppressor in epithelial ovarian cancer cells. This chain is Ribosomal protein S6 kinase alpha-2 (Rps6ka2), found in Mus musculus (Mouse).